A 193-amino-acid polypeptide reads, in one-letter code: Imidazoleglycerol-phosphate dehydratase (193 aa).

Belongs to the imidazoleglycerol-phosphate dehydratase family.

It localises to the cytoplasm. The enzyme catalyses D-erythro-1-(imidazol-4-yl)glycerol 3-phosphate = 3-(imidazol-4-yl)-2-oxopropyl phosphate + H2O. Its pathway is amino-acid biosynthesis; L-histidine biosynthesis; L-histidine from 5-phospho-alpha-D-ribose 1-diphosphate: step 6/9. This chain is Imidazoleglycerol-phosphate dehydratase, found in Saccharolobus islandicus (strain M.14.25 / Kamchatka #1) (Sulfolobus islandicus).